A 528-amino-acid chain; its full sequence is Protein phosphatase 1 regulatory subunit 16A (528 aa).

The stretch at 18 to 45 (STQERLKHAQKRRAQQVKMWAQAEKEAQ) forms a coiled coil. A disordered region spans residues 19 to 59 (TQERLKHAQKRRAQQVKMWAQAEKEAQGKKGPGERPRKEAA). Basic and acidic residues predominate over residues 40 to 58 (AEKEAQGKKGPGERPRKEA). ANK repeat units lie at residues 70-99 (PPSV…SPDL), 103-132 (DGLT…NINA), 136-165 (ECWT…NLLA), 231-260 (HGAT…SLSA), and 264-293 (DGWE…DLNA). Disordered stretches follow at residues 330–351 (RQRS…VVRR) and 367–421 (QEAI…SPVR). S433 carries the post-translational modification Phosphoserine. A disordered region spans residues 462-505 (QRAAAKLQRPPPEGPESPETAEPGLPGDTVTPQPDCGFRAGGDP). C524 is lipidated: S-palmitoyl cysteine. Residue C525 is modified to Cysteine methyl ester. Residue C525 is the site of S-farnesyl cysteine attachment. The propeptide at 526–528 (LLM) is removed in mature form.

As to quaternary structure, binds PP1.

The protein localises to the cell membrane. In terms of biological role, inhibits protein phosphatase 1 activity toward phosphorylase, myosin light chain and myosin substrates. The sequence is that of Protein phosphatase 1 regulatory subunit 16A (PPP1R16A) from Homo sapiens (Human).